A 223-amino-acid chain; its full sequence is Phosphoribosylformylglycinamidine synthase subunit PurQ (223 aa).

One can recognise a Glutamine amidotransferase type-1 domain in the interval 2-223; the sequence is KFAVLKFPGS…MVNSWREQNV (222 aa). Cys-85 (nucleophile) is an active-site residue. Catalysis depends on residues His-193 and Glu-195.

In terms of assembly, part of the FGAM synthase complex composed of 1 PurL, 1 PurQ and 2 PurS subunits.

The protein resides in the cytoplasm. It catalyses the reaction N(2)-formyl-N(1)-(5-phospho-beta-D-ribosyl)glycinamide + L-glutamine + ATP + H2O = 2-formamido-N(1)-(5-O-phospho-beta-D-ribosyl)acetamidine + L-glutamate + ADP + phosphate + H(+). The catalysed reaction is L-glutamine + H2O = L-glutamate + NH4(+). Its pathway is purine metabolism; IMP biosynthesis via de novo pathway; 5-amino-1-(5-phospho-D-ribosyl)imidazole from N(2)-formyl-N(1)-(5-phospho-D-ribosyl)glycinamide: step 1/2. Its function is as follows. Part of the phosphoribosylformylglycinamidine synthase complex involved in the purines biosynthetic pathway. Catalyzes the ATP-dependent conversion of formylglycinamide ribonucleotide (FGAR) and glutamine to yield formylglycinamidine ribonucleotide (FGAM) and glutamate. The FGAM synthase complex is composed of three subunits. PurQ produces an ammonia molecule by converting glutamine to glutamate. PurL transfers the ammonia molecule to FGAR to form FGAM in an ATP-dependent manner. PurS interacts with PurQ and PurL and is thought to assist in the transfer of the ammonia molecule from PurQ to PurL. The protein is Phosphoribosylformylglycinamidine synthase subunit PurQ of Staphylococcus saprophyticus subsp. saprophyticus (strain ATCC 15305 / DSM 20229 / NCIMB 8711 / NCTC 7292 / S-41).